The following is a 414-amino-acid chain: Glucose-1-phosphate adenylyltransferase (414 aa).

Alpha-D-glucose 1-phosphate contacts are provided by residues Tyr-103, Gly-168, 183–184, and Ser-201; that span reads EK.

This sequence belongs to the bacterial/plant glucose-1-phosphate adenylyltransferase family. In terms of assembly, homotetramer.

It catalyses the reaction alpha-D-glucose 1-phosphate + ATP + H(+) = ADP-alpha-D-glucose + diphosphate. Its pathway is glycan biosynthesis; glycogen biosynthesis. Its function is as follows. Involved in the biosynthesis of ADP-glucose, a building block required for the elongation reactions to produce glycogen. Catalyzes the reaction between ATP and alpha-D-glucose 1-phosphate (G1P) to produce pyrophosphate and ADP-Glc. This chain is Glucose-1-phosphate adenylyltransferase, found in Thermus caldophilus.